The primary structure comprises 852 residues: DNA repair protein rhp54 (852 aa).

2 consecutive short sequence motifs (nuclear localization signal) follow at residues 35–51 (KKFKCPSLVISEKRKEL) and 178–181 (KRKK). The segment covering 187–205 (NRKGKKEISDSEPESDHDS) has biased composition (basic and acidic residues). Positions 187 to 208 (NRKGKKEISDSEPESDHDSCVS) are disordered. The Helicase ATP-binding domain maps to 281 to 459 (GRIDRCANGC…FSLLNFANPG (179 aa)). Position 294–301 (294–301 (DEMGLGKT)) interacts with ATP. The DEGH box signature appears at 410 to 413 (DEGH). The region spanning 614 to 767 (VLERMLYQIK…CVVDEAQDVE (154 aa)) is the Helicase C-terminal domain.

Belongs to the SNF2/RAD54 helicase family. In terms of assembly, homohexamer. Interacts with rhp51.

The protein resides in the nucleus. The enzyme catalyses ATP + H2O = ADP + phosphate + H(+). Plays an essential role in homologous recombination (HR) which is a major pathway for repairing DNA double-strand breaks (DSBs), single-stranded DNA (ssDNA) gaps, and stalled or collapsed replication forks. Acts as a molecular motor during the homology search and guides RAD51 ssDNA along a donor dsDNA thereby changing the homology search from the diffusion-based mechanism to a motor-guided mechanism. Plays also an essential role in RAD51-mediated synaptic complex formation which consists of three strands encased in a protein filament formed once homology is recognized. Once DNA strand exchange occured, dissociates RAD51 from nucleoprotein filaments formed on dsDNA. This chain is DNA repair protein rhp54 (rhp54), found in Schizosaccharomyces pombe (strain 972 / ATCC 24843) (Fission yeast).